The sequence spans 394 residues: tRNA-specific 2-thiouridylase MnmA (394 aa).

ATP contacts are provided by residues 30-37 and Leu56; that span reads AMSGGVDS. The active-site Nucleophile is the Cys124. Cys124 and Cys220 are joined by a disulfide. Residue Gly148 coordinates ATP. Residues 170 to 172 form an interaction with tRNA region; sequence RDQ. The active-site Cysteine persulfide intermediate is Cys220.

The protein belongs to the MnmA/TRMU family.

Its subcellular location is the cytoplasm. It carries out the reaction S-sulfanyl-L-cysteinyl-[protein] + uridine(34) in tRNA + AH2 + ATP = 2-thiouridine(34) in tRNA + L-cysteinyl-[protein] + A + AMP + diphosphate + H(+). Functionally, catalyzes the 2-thiolation of uridine at the wobble position (U34) of tRNA, leading to the formation of s(2)U34. The polypeptide is tRNA-specific 2-thiouridylase MnmA (Hyphomonas neptunium (strain ATCC 15444)).